We begin with the raw amino-acid sequence, 800 residues long: DNA mismatch repair protein MutS (800 aa).

Residue 616–623 coordinates ATP; the sequence is GPNMGGKS.

It belongs to the DNA mismatch repair MutS family.

In terms of biological role, this protein is involved in the repair of mismatches in DNA. It is possible that it carries out the mismatch recognition step. This protein has a weak ATPase activity. The chain is DNA mismatch repair protein MutS from Buchnera aphidicola subsp. Baizongia pistaciae (strain Bp).